We begin with the raw amino-acid sequence, 450 residues long: Tubulin beta-6 chain (450 aa).

8 residues coordinate GTP: glutamine 11, glutamate 71, serine 140, glycine 144, threonine 145, glycine 146, asparagine 206, and asparagine 228. Residue glutamate 71 participates in Mg(2+) binding. The tract at residues 429 to 450 is disordered; it reads DATVEDEEEYEGEEGLDENYET. The span at 431-450 shows a compositional bias: acidic residues; that stretch reads TVEDEEEYEGEEGLDENYET.

Belongs to the tubulin family. Dimer of alpha and beta chains. A typical microtubule is a hollow water-filled tube with an outer diameter of 25 nm and an inner diameter of 15 nM. Alpha-beta heterodimers associate head-to-tail to form protofilaments running lengthwise along the microtubule wall with the beta-tubulin subunit facing the microtubule plus end conferring a structural polarity. Microtubules usually have 13 protofilaments but different protofilament numbers can be found in some organisms and specialized cells. It depends on Mg(2+) as a cofactor.

It localises to the cytoplasm. Its subcellular location is the cytoskeleton. Tubulin is the major constituent of microtubules, a cylinder consisting of laterally associated linear protofilaments composed of alpha- and beta-tubulin heterodimers. Microtubules grow by the addition of GTP-tubulin dimers to the microtubule end, where a stabilizing cap forms. Below the cap, tubulin dimers are in GDP-bound state, owing to GTPase activity of alpha-tubulin. This chain is Tubulin beta-6 chain, found in Gossypium hirsutum (Upland cotton).